Reading from the N-terminus, the 225-residue chain is Putative elongation factor 1 gamma homolog (225 aa).

Residues 94–225 (DFKTRADILR…MCETEMQPIK (132 aa)) enclose the GST C-terminal domain.

The sequence is that of Putative elongation factor 1 gamma homolog from Saccharomyces cerevisiae (strain ATCC 204508 / S288c) (Baker's yeast).